The primary structure comprises 228 residues: 2-hydroxy-3-keto-5-methylthiopentenyl-1-phosphate phosphatase (228 aa).

The protein belongs to the HAD-like hydrolase superfamily. MtnX family.

It catalyses the reaction 2-hydroxy-5-methylsulfanyl-3-oxopent-1-enyl phosphate + H2O = 1,2-dihydroxy-5-(methylsulfanyl)pent-1-en-3-one + phosphate. Its pathway is amino-acid biosynthesis; L-methionine biosynthesis via salvage pathway; L-methionine from S-methyl-5-thio-alpha-D-ribose 1-phosphate: step 4/6. Dephosphorylates 2-hydroxy-3-keto-5-methylthiopentenyl-1-phosphate (HK-MTPenyl-1-P) yielding 1,2-dihydroxy-3-keto-5-methylthiopentene (DHK-MTPene). The protein is 2-hydroxy-3-keto-5-methylthiopentenyl-1-phosphate phosphatase of Lysinibacillus sphaericus (strain C3-41).